Reading from the N-terminus, the 1775-residue chain is ATP-dependent RNA helicase DEAH12, chloroplastic (1775 aa).

Residues Met-1 to Arg-33 constitute a chloroplast transit peptide. Residues Met-1 to Val-77 form a disordered region. Over residues Ser-21–Ser-34 the composition is skewed to low complexity. Over residues Ala-35–Pro-60 the composition is skewed to polar residues. Residues Leu-316–Asn-480 enclose the Helicase ATP-binding domain. Gly-329–Ser-336 lines the ATP pocket. Residues Asp-427–His-430 carry the DEAH box motif. Residues Asp-510 to Gly-676 enclose the Helicase C-terminal domain. The segment at Ile-1560 to Ile-1767 is TRIAD supradomain. 18 residues coordinate Zn(2+): Cys-1564, Cys-1567, Cys-1580, His-1582, Cys-1585, Cys-1588, Cys-1607, Cys-1612, Cys-1652, Cys-1657, Cys-1675, Cys-1678, Cys-1683, Cys-1686, His-1691, Cys-1696, Cys-1722, and Cys-1725. The segment at Cys-1564–Cys-1612 adopts an RING-type 1 zinc-finger fold. The IBR-type zinc finger occupies Asp-1631–Cys-1696. An RING-type 2; atypical zinc finger spans residues Cys-1722–Cys-1750. Residue Cys-1735 is part of the active site. Residues Cys-1740 and Cys-1742 each coordinate Zn(2+).

This sequence belongs to the DEAD box helicase family. DEAH subfamily.

The protein localises to the plastid. It is found in the chloroplast. The enzyme catalyses ATP + H2O = ADP + phosphate + H(+). The protein is ATP-dependent RNA helicase DEAH12, chloroplastic of Arabidopsis thaliana (Mouse-ear cress).